We begin with the raw amino-acid sequence, 355 residues long: Oligopeptide transport ATP-binding protein AmiE (355 aa).

Residues L9–L260 enclose the ABC transporter domain. G45 to S52 contacts ATP.

This sequence belongs to the ABC transporter superfamily.

Its subcellular location is the cell membrane. In terms of biological role, part of the binding-protein-dependent transport system for oligopeptides. Probably responsible for energy coupling to the transport system. This chain is Oligopeptide transport ATP-binding protein AmiE (amiE), found in Streptococcus pneumoniae serotype 4 (strain ATCC BAA-334 / TIGR4).